A 414-amino-acid polypeptide reads, in one-letter code: Serine hydroxymethyltransferase (414 aa).

(6S)-5,6,7,8-tetrahydrofolate contacts are provided by residues L121 and 125–127; that span reads GHL. Residue K229 is modified to N6-(pyridoxal phosphate)lysine.

It belongs to the SHMT family. As to quaternary structure, homodimer. Requires pyridoxal 5'-phosphate as cofactor.

Its subcellular location is the cytoplasm. The catalysed reaction is (6R)-5,10-methylene-5,6,7,8-tetrahydrofolate + glycine + H2O = (6S)-5,6,7,8-tetrahydrofolate + L-serine. It functions in the pathway one-carbon metabolism; tetrahydrofolate interconversion. It participates in amino-acid biosynthesis; glycine biosynthesis; glycine from L-serine: step 1/1. Its function is as follows. Catalyzes the reversible interconversion of serine and glycine with tetrahydrofolate (THF) serving as the one-carbon carrier. This reaction serves as the major source of one-carbon groups required for the biosynthesis of purines, thymidylate, methionine, and other important biomolecules. Also exhibits THF-independent aldolase activity toward beta-hydroxyamino acids, producing glycine and aldehydes, via a retro-aldol mechanism. This chain is Serine hydroxymethyltransferase, found in Polaromonas naphthalenivorans (strain CJ2).